We begin with the raw amino-acid sequence, 193 residues long: dTTP/UTP pyrophosphatase (193 aa).

Aspartate 71 serves as the catalytic Proton acceptor.

Belongs to the Maf family. YhdE subfamily. Requires a divalent metal cation as cofactor.

The protein localises to the cytoplasm. It catalyses the reaction dTTP + H2O = dTMP + diphosphate + H(+). The enzyme catalyses UTP + H2O = UMP + diphosphate + H(+). Its function is as follows. Nucleoside triphosphate pyrophosphatase that hydrolyzes dTTP and UTP. May have a dual role in cell division arrest and in preventing the incorporation of modified nucleotides into cellular nucleic acids. The chain is dTTP/UTP pyrophosphatase from Dictyoglomus turgidum (strain DSM 6724 / Z-1310).